The following is a 73-amino-acid chain: Translation initiation factor IF-1 (73 aa).

In terms of domain architecture, S1-like spans 1-72; that stretch reads MAKEDHIEMA…SKGRIIFRDK (72 aa).

The protein belongs to the IF-1 family. Component of the 30S ribosomal translation pre-initiation complex which assembles on the 30S ribosome in the order IF-2 and IF-3, IF-1 and N-formylmethionyl-tRNA(fMet); mRNA recruitment can occur at any time during PIC assembly.

It localises to the cytoplasm. In terms of biological role, one of the essential components for the initiation of protein synthesis. Stabilizes the binding of IF-2 and IF-3 on the 30S subunit to which N-formylmethionyl-tRNA(fMet) subsequently binds. Helps modulate mRNA selection, yielding the 30S pre-initiation complex (PIC). Upon addition of the 50S ribosomal subunit IF-1, IF-2 and IF-3 are released leaving the mature 70S translation initiation complex. This is Translation initiation factor IF-1 from Legionella pneumophila (strain Paris).